Consider the following 338-residue polypeptide: tRNA N6-adenosine threonylcarbamoyltransferase (338 aa).

Residues His-111 and His-115 each coordinate Fe cation. Substrate-binding positions include 134-138 (LVSGG), Asp-167, Gly-180, and Asn-272. Residue Asp-300 coordinates Fe cation.

Belongs to the KAE1 / TsaD family. Fe(2+) serves as cofactor.

The protein localises to the cytoplasm. It carries out the reaction L-threonylcarbamoyladenylate + adenosine(37) in tRNA = N(6)-L-threonylcarbamoyladenosine(37) in tRNA + AMP + H(+). In terms of biological role, required for the formation of a threonylcarbamoyl group on adenosine at position 37 (t(6)A37) in tRNAs that read codons beginning with adenine. Is involved in the transfer of the threonylcarbamoyl moiety of threonylcarbamoyl-AMP (TC-AMP) to the N6 group of A37, together with TsaE and TsaB. TsaD likely plays a direct catalytic role in this reaction. The polypeptide is tRNA N6-adenosine threonylcarbamoyltransferase (Shewanella sp. (strain ANA-3)).